We begin with the raw amino-acid sequence, 244 residues long: Ureidoacrylate amidohydrolase RutB (244 aa).

Residue Asp38 is the Proton acceptor of the active site. Lys147 is a catalytic residue. The Nucleophile role is filled by Cys180.

The protein belongs to the isochorismatase family. RutB subfamily.

It catalyses the reaction (Z)-3-ureidoacrylate + H2O + H(+) = (Z)-3-aminoacrylate + NH4(+) + CO2. The catalysed reaction is (Z)-3-ureidoacrylate + H2O = (Z)-3-aminoacrylate + carbamate + H(+). It carries out the reaction (Z)-2-methylureidoacrylate + H2O + H(+) = (Z)-2-methylaminoacrylate + NH4(+) + CO2. Its function is as follows. Hydrolyzes ureidoacrylate to form aminoacrylate and carbamate. The carbamate hydrolyzes spontaneously, thereby releasing one of the nitrogen atoms of the pyrimidine ring as ammonia and one of its carbon atoms as CO2. The polypeptide is Ureidoacrylate amidohydrolase RutB (Escherichia coli O6:H1 (strain CFT073 / ATCC 700928 / UPEC)).